A 223-amino-acid polypeptide reads, in one-letter code: Transcriptional regulator HMO1 (223 aa).

2 disordered regions span residues 69-89 and 165-223; these read IEATESKKKRKQEKDPNAPKK and DGSA…HGSP. Positions 70–86 are enriched in basic and acidic residues; the sequence is EATESKKKRKQEKDPNA. Residues 87–160 constitute a DNA-binding region (HMG box); sequence PKKPLTMFFQ…IYNIEKKKYE (74 aa). Basic residues predominate over residues 204 to 223; the sequence is KKKKKTEKKEKKKKSGHGSP.

The protein resides in the nucleus. Functionally, transcription factor that binds upstream of hexose and ergosterol metabolism, as well as cell cycle genes. Activates pseudohyphal growth. The sequence is that of Transcriptional regulator HMO1 (HMO1) from Candida albicans (strain SC5314 / ATCC MYA-2876) (Yeast).